A 554-amino-acid polypeptide reads, in one-letter code: CTP synthase (554 aa).

Residues 1–265 (MTPLIFVTGG…DEIVVNQLKL (265 aa)) are amidoligase domain. Position 13 (Ser-13) interacts with CTP. Residue Ser-13 participates in UTP binding. ATP is bound by residues 14-19 (SLGKGI) and Asp-71. Residues Asp-71 and Glu-139 each contribute to the Mg(2+) site. Residues 146–148 (DIE), 186–191 (KTKPTQ), and Lys-222 contribute to the CTP site. UTP contacts are provided by residues 186–191 (KTKPTQ) and Lys-222. The region spanning 292–545 (TIAVVGKYVD…IRAARERKAG (254 aa)) is the Glutamine amidotransferase type-1 domain. Position 353 (Gly-353) interacts with L-glutamine. Residue Cys-380 is the Nucleophile; for glutamine hydrolysis of the active site. L-glutamine-binding positions include 381–384 (YGMQ), Glu-404, and Arg-471. Catalysis depends on residues His-518 and Glu-520.

Belongs to the CTP synthase family. In terms of assembly, homotetramer.

It catalyses the reaction UTP + L-glutamine + ATP + H2O = CTP + L-glutamate + ADP + phosphate + 2 H(+). The enzyme catalyses L-glutamine + H2O = L-glutamate + NH4(+). It carries out the reaction UTP + NH4(+) + ATP = CTP + ADP + phosphate + 2 H(+). It participates in pyrimidine metabolism; CTP biosynthesis via de novo pathway; CTP from UDP: step 2/2. Allosterically activated by GTP, when glutamine is the substrate; GTP has no effect on the reaction when ammonia is the substrate. The allosteric effector GTP functions by stabilizing the protein conformation that binds the tetrahedral intermediate(s) formed during glutamine hydrolysis. Inhibited by the product CTP, via allosteric rather than competitive inhibition. In terms of biological role, catalyzes the ATP-dependent amination of UTP to CTP with either L-glutamine or ammonia as the source of nitrogen. Regulates intracellular CTP levels through interactions with the four ribonucleotide triphosphates. The sequence is that of CTP synthase from Stenotrophomonas maltophilia (strain R551-3).